A 299-amino-acid chain; its full sequence is Very long chain fatty acid elongase 5 (299 aa).

Methionine 1 is modified (N-acetylmethionine). 7 helical membrane passes run 26–46, 64–84, 112–132, 139–158, 168–187, 205–225, and 227–247; these read WFLL…LLIV, ILVV…YELV, VLWW…FFIL, ITVL…WFVM, FGAT…YGLS, GQLV…IWPC, and FPLG…ALFT.

The protein belongs to the ELO family. ELOVL5 subfamily. In terms of assembly, interacts with TECR. As to expression, highly expressed in lung and brain.

Its subcellular location is the endoplasmic reticulum membrane. It localises to the cell projection. It is found in the dendrite. It carries out the reaction a very-long-chain acyl-CoA + malonyl-CoA + H(+) = a very-long-chain 3-oxoacyl-CoA + CO2 + CoA. The enzyme catalyses (6Z,9Z,12Z,15Z)-octadecatetraenoyl-CoA + malonyl-CoA + H(+) = (8Z,11Z,14Z,17Z)-3-oxoicosatetraenoyl-CoA + CO2 + CoA. It catalyses the reaction (6Z,9Z,12Z)-octadecatrienoyl-CoA + malonyl-CoA + H(+) = (8Z,11Z,14Z)-3-oxoeicosatrienoyl-CoA + CO2 + CoA. The catalysed reaction is (5Z,8Z,11Z,14Z,17Z)-eicosapentaenoyl-CoA + malonyl-CoA + H(+) = 3-oxo-(7Z,10Z,13Z,16Z,19Z)-docosapentaenoyl-CoA + CO2 + CoA. It carries out the reaction (5Z,8Z,11Z,14Z)-eicosatetraenoyl-CoA + malonyl-CoA + H(+) = (7Z,10Z,13Z,16Z)-3-oxodocosatetraenoyl-CoA + CO2 + CoA. The enzyme catalyses (9Z,12Z,15Z)-octadecatrienoyl-CoA + malonyl-CoA + H(+) = (11Z,14Z,17Z)-3-oxoeicosatrienoyl-CoA + CO2 + CoA. It catalyses the reaction (9Z)-hexadecenoyl-CoA + malonyl-CoA + H(+) = 3-oxo-(11Z)-octadecenoyl-CoA + CO2 + CoA. The catalysed reaction is (9Z)-octadecenoyl-CoA + malonyl-CoA + H(+) = 3-oxo-(11Z)-eicosenoyl-CoA + CO2 + CoA. It carries out the reaction (11Z)-octadecenoyl-CoA + malonyl-CoA + H(+) = 3-oxo-(13Z)-eicosenoyl-CoA + CO2 + CoA. The enzyme catalyses (9Z,12Z)-octadecadienoyl-CoA + malonyl-CoA + H(+) = (11Z,14Z)-3-oxoicosa-11,14-dienoyl-CoA + CO2 + CoA. It functions in the pathway lipid metabolism; polyunsaturated fatty acid biosynthesis. In terms of biological role, catalyzes the first and rate-limiting reaction of the four reactions that constitute the long-chain fatty acids elongation cycle. This endoplasmic reticulum-bound enzymatic process allows the addition of 2 carbons to the chain of long- and very long-chain fatty acids (VLCFAs) per cycle. Condensing enzyme that acts specifically toward polyunsaturated acyl-CoA with the higher activity toward C18:3(n-6) acyl-CoA. May participate in the production of monounsaturated and of polyunsaturated VLCFAs of different chain lengths that are involved in multiple biological processes as precursors of membrane lipids and lipid mediators. In conditions where the essential linoleic and alpha linoleic fatty acids are lacking it is also involved in the synthesis of Mead acid from oleic acid. This chain is Very long chain fatty acid elongase 5, found in Rattus norvegicus (Rat).